The sequence spans 451 residues: Adenylyltransferase and sulfurtransferase MOCS3-1 (451 aa).

A disordered region spans residues 42 to 62 (GEDSDEAEESSNDMPTPQTKL). Positions 43–52 (EDSDEAEESS) are enriched in acidic residues. Position 60 is a phosphothreonine (T60). ATP is bound by residues G99, D120, 127–131 (SNLHR), K144, and 188–189 (DN). C229 and C232 together coordinate Zn(2+). C246 functions as the Glycyl thioester intermediate; for adenylyltransferase activity in the catalytic mechanism. Positions 304 and 307 each coordinate Zn(2+). Residues 353-449 (QSQPHLLLDV…WTGSVDATFP (97 aa)) form the Rhodanese domain. The active-site Cysteine persulfide intermediate; for sulfurtransferase activity is C408.

In the N-terminal section; belongs to the HesA/MoeB/ThiF family. UBA4 subfamily. Zn(2+) serves as cofactor.

Its subcellular location is the cytoplasm. It catalyses the reaction [molybdopterin-synthase sulfur-carrier protein]-C-terminal Gly-Gly + ATP + H(+) = [molybdopterin-synthase sulfur-carrier protein]-C-terminal Gly-Gly-AMP + diphosphate. The enzyme catalyses [molybdopterin-synthase sulfur-carrier protein]-C-terminal Gly-Gly-AMP + S-sulfanyl-L-cysteinyl-[cysteine desulfurase] + AH2 = [molybdopterin-synthase sulfur-carrier protein]-C-terminal-Gly-aminoethanethioate + L-cysteinyl-[cysteine desulfurase] + A + AMP + 2 H(+). It participates in tRNA modification; 5-methoxycarbonylmethyl-2-thiouridine-tRNA biosynthesis. It functions in the pathway cofactor biosynthesis; molybdopterin biosynthesis. Functionally, plays a central role in 2-thiolation of mcm(5)S(2)U at tRNA wobble positions of cytosolic tRNA(Lys), tRNA(Glu) and tRNA(Gln). Also essential during biosynthesis of the molybdenum cofactor. Acts by mediating the C-terminal thiocarboxylation of sulfur carriers URM1 and MOCS2A. Its N-terminus first activates URM1 and MOCS2A as acyl-adenylates (-COAMP), then the persulfide sulfur on the catalytic cysteine is transferred to URM1 and MOCS2A to form thiocarboxylation (-COSH) of their C-terminus. The reaction probably involves hydrogen sulfide that is generated from the persulfide intermediate and that acts as a nucleophile towards URM1 and MOCS2A. Subsequently, a transient disulfide bond is formed. Does not use thiosulfate as sulfur donor; NFS1 probably acting as a sulfur donor for thiocarboxylation reactions. This chain is Adenylyltransferase and sulfurtransferase MOCS3-1, found in Drosophila pseudoobscura pseudoobscura (Fruit fly).